Consider the following 130-residue polypeptide: Small ribosomal subunit protein uS9 (130 aa).

Positions 98–130 are disordered; that stretch reads LKRAGLLTRDPRMKERKKPGLKKARRSPQFSKR. Basic residues predominate over residues 111 to 130; it reads KERKKPGLKKARRSPQFSKR.

It belongs to the universal ribosomal protein uS9 family.

This Staphylococcus epidermidis (strain ATCC 35984 / DSM 28319 / BCRC 17069 / CCUG 31568 / BM 3577 / RP62A) protein is Small ribosomal subunit protein uS9.